Here is a 345-residue protein sequence, read N- to C-terminus: Eukaryotic translation initiation factor 3 subunit F (345 aa).

An MPN domain is found at 30–166 (VVIQPQALFS…TRAYISAPVG (137 aa)). Residues 308–345 (GGESGSTESGQRGGQRGGKGGRGGQQRNQERSGEEVRA) form a disordered region. The segment covering 318–331 (QRGGQRGGKGGRGG) has biased composition (gly residues). Residues 335–345 (NQERSGEEVRA) are compositionally biased toward basic and acidic residues.

This sequence belongs to the eIF-3 subunit F family. Component of the eukaryotic translation initiation factor 3 (eIF-3) complex.

Its subcellular location is the cytoplasm. Component of the eukaryotic translation initiation factor 3 (eIF-3) complex, which is involved in protein synthesis of a specialized repertoire of mRNAs and, together with other initiation factors, stimulates binding of mRNA and methionyl-tRNAi to the 40S ribosome. The eIF-3 complex specifically targets and initiates translation of a subset of mRNAs involved in cell proliferation. The sequence is that of Eukaryotic translation initiation factor 3 subunit F from Aspergillus terreus (strain NIH 2624 / FGSC A1156).